The sequence spans 230 residues: Sugar fermentation stimulation protein homolog (230 aa).

It belongs to the SfsA family.

The polypeptide is Sugar fermentation stimulation protein homolog (Thermoanaerobacter pseudethanolicus (strain ATCC 33223 / 39E) (Clostridium thermohydrosulfuricum)).